Reading from the N-terminus, the 472-residue chain is Poly(A) polymerase catalytic subunit (472 aa).

Residues Asp-194 and Asp-196 contribute to the active site.

Belongs to the poxviridae poly(A) polymerase catalytic subunit family. In terms of assembly, heterodimer of a large (catalytic) subunit and a small (regulatory) subunit.

The enzyme catalyses RNA(n) + ATP = RNA(n)-3'-adenine ribonucleotide + diphosphate. In terms of biological role, polymerase that creates the 3'-poly(A) tail of mRNA's. This chain is Poly(A) polymerase catalytic subunit (PAPL), found in Fowlpox virus (strain NVSL) (FPV).